The chain runs to 114 residues: Helper of Tim protein 13 (114 aa).

Residues 10–90 (LVDKESRCEH…DSLQCPNCRS (81 aa)) form a CHY-type; degenerate zinc finger. The Zn(2+) site is built by cysteine 17, histidine 19, cysteine 40, cysteine 43, cysteine 67, cysteine 70, cysteine 85, and cysteine 88.

As to quaternary structure, interacts with the small Tim proteins.

Its subcellular location is the mitochondrion intermembrane space. It localises to the mitochondrion membrane. Functionally, required for the assembly or recycling of the small Tim proteins in the mitochondrial intermembrane, thereby participating in the import and insertion of multi-pass transmembrane proteins into the mitochondrial inner membrane. The polypeptide is Helper of Tim protein 13 (HOT13) (Kluyveromyces lactis (strain ATCC 8585 / CBS 2359 / DSM 70799 / NBRC 1267 / NRRL Y-1140 / WM37) (Yeast)).